Here is a 205-residue protein sequence, read N- to C-terminus: MSEIKLNYHKTHFLTSAPNIRSIPEDTGIEIAFAGRSNAGKSTALNALTNQKNLARTSKTPGRTQLINLFEVEPNCKLVDLPGYGYAAVPEQMKIQWQKSLGEYLQKRECLAGLVVLMDIRHPLKDLDQQMIEWAVSANLPVLLLLTKADKLSQSARSKQVKMVREAILPFQGDIQVEAFSAQNKIGIDKLAVKLDFWFSPLFAE.

Residues 27-201 form the EngB-type G domain; the sequence is TGIEIAFAGR…AVKLDFWFSP (175 aa). Residues 35-42, 62-66, 80-83, 147-150, and 180-182 each bind GTP; these read GRSNAGKS, GRTQL, DLPG, TKAD, and FSA. 2 residues coordinate Mg(2+): Ser-42 and Thr-64.

The protein belongs to the TRAFAC class TrmE-Era-EngA-EngB-Septin-like GTPase superfamily. EngB GTPase family. The cofactor is Mg(2+).

In terms of biological role, necessary for normal cell division and for the maintenance of normal septation. The sequence is that of Probable GTP-binding protein EngB from Haemophilus influenzae (strain PittGG).